Reading from the N-terminus, the 234-residue chain is Short neuropeptide F (234 aa).

An N-terminal signal peptide occupies residues 1–22 (MYRINLTTFTLLLVLAVGSLMS). Positions 23-56 (ESLHPSDGAINDLYEYLLQREYAAPVSYADHQIK) are excised as a propeptide. Residues phenylalanine 69 and phenylalanine 101 each carry the phenylalanine amide modification. The residue at position 132 (tryptophan 132) is a Tryptophan amide. The residue at position 165 (phenylalanine 165) is a Phenylalanine amide. The segment covering 181–190 (TTGQQAQPAN) has biased composition (polar residues). The segment at 181–234 (TTGQQAQPANEASEKRAPTQRLRWGRSDPALAKDSSEDKALDVEESENTNADDK) is disordered. The residue at position 204 (tryptophan 204) is a Tryptophan amide. A propeptide spanning residues 207–234 (SDPALAKDSSEDKALDVEESENTNADDK) is cleaved from the precursor.

This sequence belongs to the NPY family. In terms of tissue distribution, expressed in all body parts of larva, pupae and adults.

The protein localises to the secreted. Functionally, plays a role in controlling food intake and regulating body size. The chain is Short neuropeptide F from Anopheles gambiae (African malaria mosquito).